The sequence spans 496 residues: uncharacterized protein (496 aa).

Mg(2+)-binding residues include Asp-36, Asp-81, Glu-300, Glu-302, Asp-321, Asp-323, and Asp-375.

The protein belongs to the XPG/RAD2 endonuclease family. FEN1 subfamily. It depends on Mg(2+) as a cofactor.

This is an uncharacterized protein from Schizosaccharomyces pombe (strain 972 / ATCC 24843) (Fission yeast).